Here is a 178-residue protein sequence, read N- to C-terminus: uncharacterized protein (178 aa).

A disordered region spans residues 1–89 (MSAKEGSSHP…GEKKGKTEKL (89 aa)). 2 stretches are compositionally biased toward basic and acidic residues: residues 44–53 (PYQKNEKVVV) and 61–89 (AFLH…TEKL).

This is an uncharacterized protein from Schizosaccharomyces pombe (strain 972 / ATCC 24843) (Fission yeast).